A 310-amino-acid chain; its full sequence is MVKVYAPASSANMSVGFDVLGAAVTPVDGALLGDVVTVEAAETFSLNNLGRFADKLPSEPRENIVYQCWERFCQELGKQIPVAMTLEKNMPIGSGLGSSACSVVAALMAMNEHCGKPLNDTRLLALMGELEGRISGSIHYDNVAPCFLGGMQLMIEENDIISQQVPGFDEWLWVLAYPGIKVSTAEARAILPAQYRRQDCIAHGRHLAGFIHACYSRQPELAAKLMKDVIAEPYRERLLPGFRQARQAVAEIGAVASGISGSGPTLFALCDKPETAQRVADWLGKNYLQNQEGFVHICQLDTAGARVLEN.

Residue 91–101 (PIGSGLGSSAC) coordinates ATP.

Belongs to the GHMP kinase family. Homoserine kinase subfamily.

It is found in the cytoplasm. The catalysed reaction is L-homoserine + ATP = O-phospho-L-homoserine + ADP + H(+). It functions in the pathway amino-acid biosynthesis; L-threonine biosynthesis; L-threonine from L-aspartate: step 4/5. Its function is as follows. Catalyzes the ATP-dependent phosphorylation of L-homoserine to L-homoserine phosphate. This Escherichia coli (strain SMS-3-5 / SECEC) protein is Homoserine kinase.